A 295-amino-acid polypeptide reads, in one-letter code: Proline-rich protein 18 (295 aa).

Positions 1 to 13 (MPFPPMPPPPAPA) are enriched in pro residues. The interval 1–133 (MPFPPMPPPP…GAGPCPDSAA (133 aa)) is disordered. A compositionally biased stretch (low complexity) spans 14-29 (PGAQAARQLPRRPCAA). Residue Ser47 is modified to Phosphoserine. Arg83 carries the post-translational modification Omega-N-methylarginine. The span at 103-126 (ARTTYAATSAGTGTTAAGTSSGAG) shows a compositional bias: low complexity. An Asymmetric dimethylarginine modification is found at Arg172. Over residues 181-192 (ARAAGPRRGGPA) the composition is skewed to low complexity. Positions 181–227 (ARAAGPRRGGPASDPDAPPTAGQGRRAPPPGAQLLHGGLQVPQLSPR) are disordered. Arg188 is subject to Omega-N-methylarginine.

The polypeptide is Proline-rich protein 18 (PRR18) (Homo sapiens (Human)).